The chain runs to 757 residues: Xaa-Pro dipeptidyl-peptidase (757 aa).

Active-site charge relay system residues include S348, D468, and H498.

It belongs to the peptidase S15 family. As to quaternary structure, homodimer.

The protein resides in the cytoplasm. The catalysed reaction is Hydrolyzes Xaa-Pro-|- bonds to release unblocked, N-terminal dipeptides from substrates including Ala-Pro-|-p-nitroanilide and (sequentially) Tyr-Pro-|-Phe-Pro-|-Gly-Pro-|-Ile.. In terms of biological role, removes N-terminal dipeptides sequentially from polypeptides having unsubstituted N-termini provided that the penultimate residue is proline. This chain is Xaa-Pro dipeptidyl-peptidase, found in Streptococcus pneumoniae (strain ATCC 700669 / Spain 23F-1).